The following is a 243-amino-acid chain: Small ribosomal subunit protein uS2c (243 aa).

This sequence belongs to the universal ribosomal protein uS2 family.

The protein localises to the plastid. Its subcellular location is the chloroplast. This chain is Small ribosomal subunit protein uS2c (rps2), found in Cyanidium caldarium (Red alga).